A 195-amino-acid chain; its full sequence is 3-isopropylmalate dehydratase small subunit (195 aa).

The protein belongs to the LeuD family. LeuD type 1 subfamily. Heterodimer of LeuC and LeuD.

The enzyme catalyses (2R,3S)-3-isopropylmalate = (2S)-2-isopropylmalate. It participates in amino-acid biosynthesis; L-leucine biosynthesis; L-leucine from 3-methyl-2-oxobutanoate: step 2/4. Its function is as follows. Catalyzes the isomerization between 2-isopropylmalate and 3-isopropylmalate, via the formation of 2-isopropylmaleate. The protein is 3-isopropylmalate dehydratase small subunit of Oenococcus oeni (strain ATCC BAA-331 / PSU-1).